The sequence spans 593 residues: Calnexin (593 aa).

An N-terminal signal peptide occupies residues 1-20 (MEGKWLLCMLLVLGTTIVQA). Topologically, residues 21 to 482 (HEGHDDDMID…QMIEAAEERP (462 aa)) are lumenal. Residues Ser75 and Asp118 each coordinate Ca(2+). Lys138 carries the N6-acetyllysine modification. Residues Cys161 and Cys195 are joined by a disulfide bond. An alpha-D-glucoside contacts are provided by Tyr165, Lys167, Tyr186, and Asp193. Residues 261-346 (GNLLNDMTPP…AEKPEDWDED (86 aa)) are disordered. Residues 277–410 (IEDPEDQKPE…RKIPNPDFFE (134 aa)) form a p domain (Extended arm) region. Tandem repeats lie at residues 279-290 (DPEDQKPEDWDE), 296-307 (DPDAVKPDDWNE), 315-326 (DEEATKPDGWLD), 334-345 (DPDAEKPEDWDE), and 349-359 (GEWEAPQIANP). 2 4 X approximate repeats regions span residues 279-345 (DPED…DWDE) and 349-406 (GEWE…IPNP). The segment covering 282–320 (DQKPEDWDERPKIPDPDAVKPDDWNEDAPAKIPDEEATK) has biased composition (basic and acidic residues). The segment covering 324–346 (WLDDEPEYVPDPDAEKPEDWDED) has biased composition (acidic residues). Positions 327 to 360 (DEPEYVPDPDAEKPEDWDEDMDGEWEAPQIANPK) are interaction with PPIB. Cys361 and Cys367 are oxidised to a cystine. 3 tandem repeats follow at residues 368 to 378 (GVWQRPMIDNP), 382 to 392 (GKWKPPMIDNP), and 396 to 406 (GIWKPRKIPNP). Glu426 contacts an alpha-D-glucoside. Residue Asp437 coordinates Ca(2+). A helical membrane pass occupies residues 483–503 (WLWVVYVLTVALPVFLVILFC). S-palmitoyl cysteine attachment occurs at residues Cys503 and Cys504. Topologically, residues 504–593 (CSGKKQSSPV…SPRNRKPRRE (90 aa)) are cytoplasmic. Residues 504–593 (CSGKKQSSPV…SPRNRKPRRE (90 aa)) are sufficient to mediate interaction with SGIP1. A disordered region spans residues 511 to 593 (SPVEYKKTDA…SPRNRKPRRE (83 aa)). Residues 526–548 (KEEEEEKEEEKDKGDEEEEGEEK) show a composition bias toward acidic residues. Ser555 bears the Phosphoserine mark. The residue at position 563 (Thr563) is a Phosphothreonine. Ser565 is modified (phosphoserine; by MAPK3). Ser584 carries the post-translational modification Phosphoserine.

Belongs to the calreticulin family. In terms of assembly, interacts with MAPK3/ERK1. Interacts with KCNH2. Associates with ribosomes. Interacts with SGIP1; involved in negative regulation of endocytosis. The palmitoylated form interacts with the ribosome-translocon complex component SSR1, promoting efficient folding of glycoproteins. Interacts with SERPINA2P/SERPINA2 and with the S and Z variants of SERPINA1. Interacts with PPIB. Interacts with ZNRF4. Interacts with SMIM22. Interacts with TMX2. Interacts with TMEM35A/NACHO and CHRNA7. Interacts with reticulophagy regulators RETREG2 and RETREG3. Interacts with DNM1L; may form part of a larger protein complex at the ER-mitochondrial interface during mitochondrial fission. Interacts with ADAM7. Post-translationally, phosphorylated at Ser-565 by MAPK3/ERK1. Phosphorylation by MAPK3/ERK1 increases its association with ribosomes. In terms of processing, palmitoylation by DHHC6 leads to the preferential localization to the perinuclear rough ER. It mediates the association of calnexin with the ribosome-translocon complex (RTC) which is required for efficient folding of glycosylated proteins. Ubiquitinated, leading to proteasomal degradation. Probably ubiquitinated by ZNRF4.

The protein localises to the endoplasmic reticulum membrane. Its subcellular location is the mitochondrion membrane. It is found in the melanosome membrane. Calcium-binding protein that interacts with newly synthesized monoglucosylated glycoproteins in the endoplasmic reticulum. It may act in assisting protein assembly and/or in the retention within the ER of unassembled protein subunits. It seems to play a major role in the quality control apparatus of the ER by the retention of incorrectly folded proteins. Associated with partial T-cell antigen receptor complexes that escape the ER of immature thymocytes, it may function as a signaling complex regulating thymocyte maturation. Additionally it may play a role in receptor-mediated endocytosis at the synapse. The sequence is that of Calnexin (CANX) from Canis lupus familiaris (Dog).